Consider the following 165-residue polypeptide: Anaerobic nitrite reductase GLB1 (165 aa).

Positions 12 to 162 (VFGEEQEALV…LVAAIKREMK (151 aa)) constitute a Globin domain. Positions 45–49 (EIAPS) match the Homodimerization motif. Residues Ser55, Lys69, His73, Arg103, Thr107, and His108 each contribute to the heme b site. The short motif at 115–127 (DGHFEVTGFALLE) is the Homodimerization element.

Belongs to the plant globin family. As to quaternary structure, homodimer. It depends on heme b as a cofactor. In terms of tissue distribution, in vegetative but not in embryonic organs.

It is found in the cytoplasm. It localises to the nucleus. It catalyses the reaction Fe(III)-heme b-[protein] + nitric oxide + H2O = Fe(II)-heme b-[protein] + nitrite + 2 H(+). Functionally, phytoglobin that reduces nitrite to nitric oxide (NO) under anoxic conditions (e.g. during flooding or in waterlogged soil). May not function as an oxygen storage or transport protein. Has an unusually high affinity for O(2) through an hexacoordinate heme iron because of a very low dissociation constant. The protein is Anaerobic nitrite reductase GLB1 (HB) of Zea mays subsp. parviglumis (Balsas teosinte).